We begin with the raw amino-acid sequence, 234 residues long: Riboflavin kinase (234 aa).

An H-T-H motif-like region spans residues 1–98; it reads MAESTTAVGH…QEIFGDNSSV (98 aa). Residues 99–234 form a riboflavin kinase region; the sequence is VELTGTVTSG…RITVQLKPKE (136 aa). Residue 108-113 coordinates CDP; sequence GMGEGR. Thr137 and Asn139 together coordinate Mg(2+). FMN contacts are provided by Thr199 and Glu207. CDP is bound at residue 212–215; that stretch reads ERLR.

Belongs to the archaeal riboflavin kinase family. Requires Mg(2+) as cofactor.

It carries out the reaction riboflavin + CTP = CDP + FMN + H(+). Its pathway is cofactor biosynthesis; FMN biosynthesis; FMN from riboflavin (CTP route): step 1/1. Its function is as follows. Catalyzes the CTP-dependent phosphorylation of riboflavin (vitamin B2) to form flavin mononucleotide (FMN). This Haloquadratum walsbyi (strain DSM 16790 / HBSQ001) protein is Riboflavin kinase (ribK).